Reading from the N-terminus, the 675-residue chain is UvrABC system protein B (675 aa).

One can recognise a Helicase ATP-binding domain in the interval 32–417 (EGLSDGLAYQ…EHAGQVVEQV (386 aa)). 45-52 (GVTGSGKT) is an ATP binding site. The Beta-hairpin signature appears at 98-121 (YYDYYQPEAYVPSRDLFIEKDSAI). Positions 436-602 (QVDDLMSEIN…QIKKQVKDII (167 aa)) constitute a Helicase C-terminal domain. One can recognise a UVR domain in the interval 634–669 (IKEIAKLEKAMQQAARDLQFEEAAVLRDRIRNIKEN).

It belongs to the UvrB family. In terms of assembly, forms a heterotetramer with UvrA during the search for lesions. Interacts with UvrC in an incision complex.

The protein resides in the cytoplasm. Functionally, the UvrABC repair system catalyzes the recognition and processing of DNA lesions. A damage recognition complex composed of 2 UvrA and 2 UvrB subunits scans DNA for abnormalities. Upon binding of the UvrA(2)B(2) complex to a putative damaged site, the DNA wraps around one UvrB monomer. DNA wrap is dependent on ATP binding by UvrB and probably causes local melting of the DNA helix, facilitating insertion of UvrB beta-hairpin between the DNA strands. Then UvrB probes one DNA strand for the presence of a lesion. If a lesion is found the UvrA subunits dissociate and the UvrB-DNA preincision complex is formed. This complex is subsequently bound by UvrC and the second UvrB is released. If no lesion is found, the DNA wraps around the other UvrB subunit that will check the other stand for damage. The sequence is that of UvrABC system protein B from Neisseria gonorrhoeae.